A 264-amino-acid polypeptide reads, in one-letter code: Adenosylcobinamide-GDP ribazoletransferase (264 aa).

7 consecutive transmembrane segments (helical) span residues 10-30 (LFFIALQFFTRVPVPAWVGYT), 43-63 (LVGAWVGGVAALVLWLAAQVW), 113-133 (LGSYGALGLVGVLGLKAVALY), 141-161 (VQALIALVWAHAVSRAVPVAL), 183-203 (VSDAGLAAALGWAALACAAAW), 205-225 (LGASAFTLACAALGVIALAAF), and 243-263 (GAAQQLCELAAYLGWLAGVWF).

Belongs to the CobS family. Mg(2+) is required as a cofactor.

It localises to the cell inner membrane. The enzyme catalyses alpha-ribazole + adenosylcob(III)inamide-GDP = adenosylcob(III)alamin + GMP + H(+). It catalyses the reaction alpha-ribazole 5'-phosphate + adenosylcob(III)inamide-GDP = adenosylcob(III)alamin 5'-phosphate + GMP + H(+). It participates in cofactor biosynthesis; adenosylcobalamin biosynthesis; adenosylcobalamin from cob(II)yrinate a,c-diamide: step 7/7. Functionally, joins adenosylcobinamide-GDP and alpha-ribazole to generate adenosylcobalamin (Ado-cobalamin). Also synthesizes adenosylcobalamin 5'-phosphate from adenosylcobinamide-GDP and alpha-ribazole 5'-phosphate. This is Adenosylcobinamide-GDP ribazoletransferase from Leptothrix cholodnii (strain ATCC 51168 / LMG 8142 / SP-6) (Leptothrix discophora (strain SP-6)).